The primary structure comprises 924 residues: Probable dipeptidyl-aminopeptidase B (924 aa).

Positions 1 to 12 (MPSTYSDDNTLR) are enriched in polar residues. The tract at residues 1–102 (MPSTYSDDNT…RSNQRSSADG (102 aa)) is disordered. Topologically, residues 1–111 (MPSTYSDDNT…GQRMDRSLRR (111 aa)) are cytoplasmic. Residues 14–23 (GLDRFRDHSP) are compositionally biased toward basic and acidic residues. A compositionally biased stretch (polar residues) spans 31–43 (SQETDSTVSTTSI). Residues 47-58 (RIQERLDTKEFP) show a composition bias toward basic and acidic residues. Positions 87–100 (NASPSSRSNQRSSA) are enriched in low complexity. The helical; Signal-anchor for type II membrane protein transmembrane segment at 112–132 (WLFIVSGALVATWVIGLIFFV) threads the bilayer. At 133–924 (SSKAYKPSSS…GMKRRALPTA (792 aa)) the chain is on the vacuolar side. N-linked (GlcNAc...) asparagine glycans are attached at residues N231 and N364. S768 acts as the Charge relay system in catalysis. The N-linked (GlcNAc...) asparagine glycan is linked to N827. Active-site charge relay system residues include D845 and H878.

The protein belongs to the peptidase S9B family.

The protein localises to the vacuole membrane. It carries out the reaction Release of an N-terminal dipeptide, Xaa-Yaa-|-Zaa-, from a polypeptide, preferentially when Yaa is Pro, provided Zaa is neither Pro nor hydroxyproline.. Functionally, type IV dipeptidyl-peptidase which removes N-terminal dipeptides sequentially from polypeptides having unsubstituted N-termini provided that the penultimate residue is proline. In Neurospora crassa (strain ATCC 24698 / 74-OR23-1A / CBS 708.71 / DSM 1257 / FGSC 987), this protein is Probable dipeptidyl-aminopeptidase B (dapB).